Here is a 268-residue protein sequence, read N- to C-terminus: MRLVLEEPFKRLWNGRDPFEAVEALQGKVYRELEGRRTLRTEVDGRGYFVKIHRGIGWGEIAKNLLTAKLPVLGARQEWQAIRRLHEAGVATMTAVAYGERGSDPARQHSFIVTEELAPTVDLEVFSQDWRERPPPPRLKRALVEAVARMVGDMHRAGVNHRDCYICHFLLHTDKPVSADDFRLSVIDLHRAQTRDATPKRWRNKDLAALYFSALDIGLTRRDKLRFLRTYFRRPLREILRDEAGLLAWMERKAEKLYERKQRYGDLL.

Phosphotyrosine; by autocatalysis occurs at positions 30, 48, and 98. Asp-163 is an active-site residue. Tyr-165, Tyr-211, Tyr-231, Tyr-258, and Tyr-264 each carry phosphotyrosine; by autocatalysis.

This sequence belongs to the protein kinase superfamily. KdkA/RfaP family. In terms of assembly, interacts with acyl-AcpP. The WaaP hydrophobic channel can accommodate acyl chains of different lengths, but myristyl-ACP is likely its physiological binding partner. Requires Mg(2+) as cofactor.

It localises to the cytoplasm. The catalysed reaction is an L-alpha-D-Hep-(1-&gt;3)-L-alpha-D-Hep-(1-&gt;5)-[alpha-Kdo-(2-&gt;4)]-alpha-Kdo-(2-&gt;6)-lipid A + ATP = an L-alpha-D-Hep-(1-&gt;3)-4-O-phospho-L-alpha-D-Hep-(1-&gt;5)-[alpha-Kdo-(2-&gt;4)]-alpha-Kdo-(2-&gt;6)-lipid A + ADP + H(+). The enzyme catalyses L-tyrosyl-[protein] + ATP = O-phospho-L-tyrosyl-[protein] + ADP + H(+). The protein operates within bacterial outer membrane biogenesis; LPS core biosynthesis. Acylated-acyl carrier protein (acyl-ACP) acts as a very tightly bound cofactor necessary for the production and stability of active WaaP kinase. Kinase involved in the biosynthesis of the core oligosaccharide region of lipopolysaccharide (LPS). Catalyzes the phosphorylation of heptose I (HepI), the first heptose added to the Kdo2-lipid A module. Also has protein-tyrosine kinase activity: autophosphorylates on all Tyr residues; in vitro can phosphorylate poly(Glu,Tyr). This is Lipopolysaccharide core heptose(I) kinase WaaP from Pseudomonas aeruginosa (strain ATCC 15692 / DSM 22644 / CIP 104116 / JCM 14847 / LMG 12228 / 1C / PRS 101 / PAO1).